We begin with the raw amino-acid sequence, 855 residues long: Sucrose synthase 5 (855 aa).

The GT-B glycosyltransferase stretch occupies residues 279–758 (SIFNIVIFSI…GLQRICECYT (480 aa)).

It belongs to the glycosyltransferase 1 family. Plant sucrose synthase subfamily. In terms of tissue distribution, predominantly expressed in roots, flowers and immature seeds.

It is found in the cytoplasm. Its subcellular location is the membrane. It catalyses the reaction an NDP-alpha-D-glucose + D-fructose = a ribonucleoside 5'-diphosphate + sucrose + H(+). Functionally, sucrose-cleaving enzyme that provides UDP-glucose and fructose for various metabolic pathways. The protein is Sucrose synthase 5 (SUS5) of Oryza sativa subsp. japonica (Rice).